The sequence spans 150 residues: Cytochrome c oxidase subunit 5A, mitochondrial (150 aa).

The N-terminal 41 residues, 1–41, are a transit peptide targeting the mitochondrion; it reads MLGAALRRCAVAATTRAGPRGLLHSARTPGPAAAIQSVRCY. Residues 2–17 carry the SIFI-degron motif; it reads LGAALRRCAVAATTRA. Residues K87 and K113 each carry the N6-acetyllysine modification. Position 141 is a phosphothreonine (T141).

It belongs to the cytochrome c oxidase subunit 5A family. Component of the cytochrome c oxidase (complex IV, CIV), a multisubunit enzyme composed of 14 subunits. The complex is composed of a catalytic core of 3 subunits MT-CO1, MT-CO2 and MT-CO3, encoded in the mitochondrial DNA, and 11 supernumerary subunits COX4I, COX5A, COX5B, COX6A, COX6B, COX6C, COX7A, COX7B, COX7C, COX8 and NDUFA4, which are encoded in the nuclear genome. The complex exists as a monomer or a dimer and forms supercomplexes (SCs) in the inner mitochondrial membrane with NADH-ubiquinone oxidoreductase (complex I, CI) and ubiquinol-cytochrome c oxidoreductase (cytochrome b-c1 complex, complex III, CIII), resulting in different assemblies (supercomplex SCI(1)III(2)IV(1) and megacomplex MCI(2)III(2)IV(2)). Interacts with AFG1L. Interacts with RAB5IF. Post-translationally, in response to mitochondrial stress, the precursor protein is ubiquitinated by the SIFI complex in the cytoplasm before mitochondrial import, leading to its degradation. Within the SIFI complex, UBR4 initiates ubiquitin chain that are further elongated or branched by KCMF1.

It is found in the mitochondrion inner membrane. The protein operates within energy metabolism; oxidative phosphorylation. Component of the cytochrome c oxidase, the last enzyme in the mitochondrial electron transport chain which drives oxidative phosphorylation. The respiratory chain contains 3 multisubunit complexes succinate dehydrogenase (complex II, CII), ubiquinol-cytochrome c oxidoreductase (cytochrome b-c1 complex, complex III, CIII) and cytochrome c oxidase (complex IV, CIV), that cooperate to transfer electrons derived from NADH and succinate to molecular oxygen, creating an electrochemical gradient over the inner membrane that drives transmembrane transport and the ATP synthase. Cytochrome c oxidase is the component of the respiratory chain that catalyzes the reduction of oxygen to water. Electrons originating from reduced cytochrome c in the intermembrane space (IMS) are transferred via the dinuclear copper A center (CU(A)) of subunit 2 and heme A of subunit 1 to the active site in subunit 1, a binuclear center (BNC) formed by heme A3 and copper B (CU(B)). The BNC reduces molecular oxygen to 2 water molecules using 4 electrons from cytochrome c in the IMS and 4 protons from the mitochondrial matrix. This Gorilla gorilla gorilla (Western lowland gorilla) protein is Cytochrome c oxidase subunit 5A, mitochondrial (COX5A).